The primary structure comprises 308 residues: tRNA dimethylallyltransferase (308 aa).

An ATP-binding site is contributed by 19–26 (GPTASGKS). 21–26 (TASGKS) contacts substrate. The interval 44–47 (DSMQ) is interaction with substrate tRNA.

This sequence belongs to the IPP transferase family. As to quaternary structure, monomer. Requires Mg(2+) as cofactor.

It catalyses the reaction adenosine(37) in tRNA + dimethylallyl diphosphate = N(6)-dimethylallyladenosine(37) in tRNA + diphosphate. Functionally, catalyzes the transfer of a dimethylallyl group onto the adenine at position 37 in tRNAs that read codons beginning with uridine, leading to the formation of N6-(dimethylallyl)adenosine (i(6)A). This Methylobacterium radiotolerans (strain ATCC 27329 / DSM 1819 / JCM 2831 / NBRC 15690 / NCIMB 10815 / 0-1) protein is tRNA dimethylallyltransferase.